Reading from the N-terminus, the 78-residue chain is uncharacterized protein (78 aa).

The interval 1 to 28 (MQANHSVSYLYESSTSKRSNGLFSQTQK) is disordered.

This is an uncharacterized protein from Saccharomyces cerevisiae (strain ATCC 204508 / S288c) (Baker's yeast).